The sequence spans 477 residues: ATP synthase subunit beta (477 aa).

151-158 contributes to the ATP binding site; the sequence is GGAGVGKT.

This sequence belongs to the ATPase alpha/beta chains family. In terms of assembly, F-type ATPases have 2 components, CF(1) - the catalytic core - and CF(0) - the membrane proton channel. CF(1) has five subunits: alpha(3), beta(3), gamma(1), delta(1), epsilon(1). CF(0) has three main subunits: a(1), b(2) and c(9-12). The alpha and beta chains form an alternating ring which encloses part of the gamma chain. CF(1) is attached to CF(0) by a central stalk formed by the gamma and epsilon chains, while a peripheral stalk is formed by the delta and b chains.

It localises to the cell inner membrane. It carries out the reaction ATP + H2O + 4 H(+)(in) = ADP + phosphate + 5 H(+)(out). Produces ATP from ADP in the presence of a proton gradient across the membrane. The catalytic sites are hosted primarily by the beta subunits. This is ATP synthase subunit beta from Bradyrhizobium diazoefficiens (strain JCM 10833 / BCRC 13528 / IAM 13628 / NBRC 14792 / USDA 110).